A 151-amino-acid polypeptide reads, in one-letter code: MKYSQNQIVYVIFFFIILIVVKPIESVEWSDCSDPSDSFKIEKLEFSPEQPIAGQDLIISVSGYLNKEITKGEAYLAITFDRIPILKLKGNLCDGMGVTCPIPQGNYSTTTINQEIPENVPQGYYYVNFVLYDQDDLQITCVDVQMNITQS.

The first 26 residues, 1–26 (MKYSQNQIVYVIFFFIILIVVKPIES), serve as a signal peptide directing secretion.

It belongs to the NPC2 family. In terms of assembly, monomer.

Functionally, catalyzes the intermembrane transfer of phosphatidylglycerol and phosphatidylinositol. The sequence is that of Putative phosphatidylglycerol/phosphatidylinositol transfer protein 3 from Dictyostelium discoideum (Social amoeba).